We begin with the raw amino-acid sequence, 542 residues long: Sterile alpha motif domain-containing protein 11 (542 aa).

The disordered stretch occupies residues 268-364 (LLALPPQGPP…GRGLLSGSTL (97 aa)). Residues 273–285 (PQGPPGPGPPIPP) are compositionally biased toward pro residues. Thr342 is subject to Phosphothreonine. The 66-residue stretch at 404 to 469 (WTVDDVCNFV…AQVAKRLGRV (66 aa)) folds into the SAM domain. The interval 486–542 (LQAPELSPGHQPLSPATTTSPYEGTHLPTGQASPKQENGSGTIALLSGAPDPSQLLQ) is disordered. Position 499 is a phosphoserine (Ser499). Polar residues predominate over residues 499–526 (SPATTTSPYEGTHLPTGQASPKQENGSG).

Self-associates. Component of a Polycomb group (PcG) multiprotein PRC1-like complex. Interacts with SAMD7 and PHC2. Expressed in the outer nuclear layer of rod photoreceptors in the retina (at protein level). Predominantly expressed in retinal photoreceptors and pineal gland.

It localises to the nucleus. Its function is as follows. Component of a Polycomb group (PcG) multiprotein PRC1-like complex, essential for establishing rod photoreceptor cell identity and function by silencing nonrod gene expression in developing rod photoreceptor cells. The protein is Sterile alpha motif domain-containing protein 11 (Samd11) of Mus musculus (Mouse).